A 340-amino-acid chain; its full sequence is MSTDKITFLLNWQPTPYHIPIFLAQTKGYFKEQGLDMAILEPTNPSDVTELIGSGKVDMGLKAMIHTLAAKARGFPVTSVASLLDEPFTGVLYLKGSGITEDFQSLKGKKIGYVGEFGKIQIDELTKHYGMKPEDYTAVRCGMNVAKYIIEGKIDAGIGIECMQQVELEEYLAKQGRPASDAKMLRIDKLACLGCCCFCTVLYICNDEFLKKNPEKVRKFLKAIKKATDYVLADPVKAWKEYIDFKPRLNNDLSYKQYQRCYAYFSSSLYNVHRDWKKVTGYGKRLAILPPDYVSNYTNEYLSWPEPEEVSDPLEAQRLMAIHQEKCRQEGTFKRLALPA.

At K62 the chain carries N6-(pyridoxal phosphate)lysine. Residue H66 is part of the active site. Pyridoxal 5'-phosphate is bound at residue 115–118 (GEFG). The short motif at 195–199 (CCCFC) is the CCCFC; essential for catalytic activity, may be the site of iron coordination element.

Belongs to the NMT1/THI5 family. In terms of assembly, homodimer. Requires Fe cation as cofactor.

It catalyses the reaction N(6)-(pyridoxal phosphate)-L-lysyl-[4-amino-5-hydroxymethyl-2-methylpyrimidine phosphate synthase] + L-histidyl-[4-amino-5-hydroxymethyl-2-methylpyrimidine phosphate synthase] + 2 Fe(3+) + 4 H2O = L-lysyl-[4-amino-5-hydroxymethyl-2-methylpyrimidine phosphate synthase] + (2S)-2-amino-5-hydroxy-4-oxopentanoyl-[4-amino-5-hydroxymethyl-2-methylpyrimidine phosphate synthase] + 4-amino-2-methyl-5-(phosphooxymethyl)pyrimidine + 3-oxopropanoate + 2 Fe(2+) + 2 H(+). It functions in the pathway cofactor biosynthesis; thiamine diphosphate biosynthesis. Its function is as follows. Responsible for the formation of the pyrimidine heterocycle in the thiamine biosynthesis pathway. Catalyzes the formation of hydroxymethylpyrimidine phosphate (HMP-P) from histidine and pyridoxal phosphate (PLP). The protein uses PLP and the active site histidine to form HMP-P, generating an inactive enzyme. The enzyme can only undergo a single turnover, which suggests it is a suicide enzyme. The sequence is that of 4-amino-5-hydroxymethyl-2-methylpyrimidine phosphate synthase THI12 from Saccharomyces cerevisiae (strain ATCC 204508 / S288c) (Baker's yeast).